Reading from the N-terminus, the 401-residue chain is Chalcone synthase 6 (401 aa).

The active site involves C168.

It belongs to the thiolase-like superfamily. Chalcone/stilbene synthases family.

It catalyses the reaction (E)-4-coumaroyl-CoA + 3 malonyl-CoA + 3 H(+) = 2',4,4',6'-tetrahydroxychalcone + 3 CO2 + 4 CoA. It participates in secondary metabolite biosynthesis; flavonoid biosynthesis. Its function is as follows. The primary product of this enzyme is 4,2',4',6'-tetrahydroxychalcone (also termed naringenin-chalcone or chalcone) which can under specific conditions spontaneously isomerize into naringenin. The polypeptide is Chalcone synthase 6 (CHS6) (Sorghum bicolor (Sorghum)).